Reading from the N-terminus, the 899-residue chain is Pre-mRNA-splicing factor 6 (899 aa).

The disordered stretch occupies residues methionine 1 to aspartate 65. The segment covering threonine 28–leucine 51 has biased composition (basic and acidic residues). HAT repeat units lie at residues glutamate 221–lysine 253, arginine 255–serine 287, valine 289–serine 318, threonine 319–aspartate 350, alanine 352–tyrosine 381, asparagine 383–proline 414, proline 493–serine 525, asparagine 545–glutamine 578, leucine 608–tyrosine 645, leucine 648–serine 680, glycine 682–isoleucine 714, glycine 751–histidine 783, and alanine 819–arginine 851.

In terms of assembly, component of the U4/U6-U5 tri-snRNP complex composed of the U4, U6 and U5 snRNAs and at least PRP3, PRP4, PRP6, PRP8, PRP18, PRP31, PRP38, SNU13, SNU23, SNU66, SNU114, SPP381, SMB1, SMD1, SMD2, SMD3, SMX2, SMX3, LSM2, LSM3, LSM4, LSM5, LSM6, LSM7, LSM8, BRR2 and DIB1.

It is found in the nucleus. Functionally, participates in pre-mRNA splicing. Part of the U4/U5/U6 tri-snRNP complex, one of the building blocks of the spliceosome. The chain is Pre-mRNA-splicing factor 6 (PRP6) from Saccharomyces cerevisiae (strain ATCC 204508 / S288c) (Baker's yeast).